A 1068-amino-acid chain; its full sequence is MCPPEQPAKAMAPSKSNQAAKSAVPTKEEKSADLVMATNNSSIVSKRSVEMLYYPEPHFFCHFVKKPQRRAPLINRGYWLRMHAMEESVRRFMRESPDKPKFVLNLGCGFDPLPFILLSADRSLCSQTTFVDIDYEKLMLNKKAALREAGALTQILEDVEFGPDESAVQIRSGQYVAVGCDLKNLDKLDRVLRAEVLPAECAVLFLAEVSLTYMDVKSANAVVSWASRLSNDAQFCILEQYFPDGPSHPFAATMMEHFGKLGAPLHSIHEFPSLSDQERRFTEAGWTHAHARSLWDLWSDDEFVPAVLRTSLDSIESFDEWEEFALFASHYFLLHASTRPGTKGSKSAAATADVGPSRQAVTRSNEFRLIPNTSLPTGQRRFGALVPGGEAVIGIHSGWGRQTRVADTDVYKTSKDNIDSHARFPSSNDISARLCHTITAFSDDGDCLLVGGRTSPASALQDTWVRKNNVWQAGSSLPLARFRHCATRVTLGSDRSSGSVLIYGGKTSDGTTLDTWLLWNDNGEGWSSVTVRTMNDAPAPKARFGACLASIDSTNGLLFGGIGPDGTILEDFWTWKLYEEADGSLCMELTDQTGSLRNIALGFDILPRFGATVSSTAQGLVVSGGIIPRRVVPFDGEILLLDSATLLDCIKNGLPLTTPILSTIGLDAGFTGPRPLLVGHVSHAISTDQVLLLGGGAVCFSFGTFWTRGTWMLCPVGERAVNDWALVCENVEKPTKAKAAAQIPAKTKKQKASKKYKPEKYKSTTKVTPIRRVTVESADEFQQILEDAQPVIIESADIGPCTELWTKEYLVNTVGSDRKVIVHAAETETMSFRTKNFKYESKTFGTFMDEVHAGGRQYLRSISEKQPAKLPANLAADFPSLSSDFRLPEALKTVVENAHSSPLRISGPVTLWLHYDVMANVLCQIQGEKRLILYPPSDVPHLDVPAGASSSNINVFQNRADGAIALIPHTSPHEARLKRGDILFIPPLWLHTAAPTGKVSVAVNVFFRNLSQGYALGRDVYGNRDVQAYEKGRKDLEKLVKSFSGLPPDMARFYLLRLADELQETAEQ.

Positions 1-31 are disordered; it reads MCPPEQPAKAMAPSKSNQAAKSAVPTKEEKS. S-adenosyl-L-methionine is bound by residues Arg81, Gly107, Asp134, 181 to 182, and Glu208; that span reads DL. Residues 876 to 1024 enclose the JmjC domain; it reads ADFPSLSSDF…ALGRDVYGNR (149 aa).

It belongs to the methyltransferase superfamily. LCMT family.

It catalyses the reaction 7-[(3S)-3-amino-3-carboxypropyl]wyosine(37) in tRNA(Phe) + S-adenosyl-L-methionine = 7-[(3S)-(3-amino-3-methoxycarbonyl)propyl]wyosine(37) in tRNA(Phe) + S-adenosyl-L-homocysteine. It carries out the reaction 7-[(3S)-(3-amino-3-methoxycarbonyl)propyl]wyosine(37) in tRNA(Phe) + S-adenosyl-L-methionine + CO2 = wybutosine(37) in tRNA(Phe) + S-adenosyl-L-homocysteine + 2 H(+). It participates in tRNA modification; wybutosine-tRNA(Phe) biosynthesis. Functionally, probable S-adenosyl-L-methionine-dependent methyltransferase that acts as a component of the wybutosine biosynthesis pathway. Wybutosine is a hyper modified guanosine with a tricyclic base found at the 3'-position adjacent to the anticodon of eukaryotic phenylalanine tRNA. May methylate the carboxyl group of leucine residues to form alpha-leucine ester residues. The sequence is that of tRNA wybutosine-synthesizing protein 4 (ppm2) from Emericella nidulans (strain FGSC A4 / ATCC 38163 / CBS 112.46 / NRRL 194 / M139) (Aspergillus nidulans).